The chain runs to 480 residues: Glutamate--tRNA ligase (480 aa).

Positions 21-31 match the 'HIGH' region motif; it reads PSPTGYLHVGG. Zn(2+)-binding residues include cysteine 110, cysteine 112, cysteine 137, and histidine 139. Positions 248–252 match the 'KMSKS' region motif; sequence KLSKR. Lysine 251 is a binding site for ATP.

Belongs to the class-I aminoacyl-tRNA synthetase family. Glutamate--tRNA ligase type 1 subfamily. In terms of assembly, monomer. Requires Zn(2+) as cofactor.

The protein resides in the cytoplasm. It catalyses the reaction tRNA(Glu) + L-glutamate + ATP = L-glutamyl-tRNA(Glu) + AMP + diphosphate. Its function is as follows. Catalyzes the attachment of glutamate to tRNA(Glu) in a two-step reaction: glutamate is first activated by ATP to form Glu-AMP and then transferred to the acceptor end of tRNA(Glu). The protein is Glutamate--tRNA ligase of Mannheimia succiniciproducens (strain KCTC 0769BP / MBEL55E).